The primary structure comprises 75 residues: Brevinin-2SN2 (75 aa).

Residues 1 to 22 (MFTMKKSLLFLFFLGTISLSFC) form the signal peptide. The propeptide at 23–40 (EEERGADEDDGGEMTEEE) is removed in mature form. Cys69 and Cys75 form a disulfide bridge.

The protein belongs to the frog skin active peptide (FSAP) family. Brevinin subfamily. As to expression, expressed by the skin glands.

The protein localises to the secreted. Its function is as follows. Antimicrobial peptide. Active against some Gram-negative and a variety of Gram-positive bacterial strains. Active against fungus C.glabrata 090902 but not against C.albicans ATCC 10231. Shows hemolytic activity against human erythrocytes. The protein is Brevinin-2SN2 of Sylvirana spinulosa (Fine-spined frog).